The primary structure comprises 381 residues: Pentatricopeptide repeat-containing protein 2, mitochondrial (381 aa).

Residues 159 to 193 form a PPR repeat; it reads TSFNILMDMLFTKGKYERALQVLIEMKNQDVRFSK. Phosphoserine is present on S375.

It belongs to the PTCD2 family. High expression in heart and liver and low expression in kidney, brain and testis.

Its subcellular location is the mitochondrion. Involved in mitochondrial RNA maturation and mitochondrial respiratory chain function. The sequence is that of Pentatricopeptide repeat-containing protein 2, mitochondrial (Ptcd2) from Mus musculus (Mouse).